Reading from the N-terminus, the 362-residue chain is Sphingolipid delta(4)-desaturase (362 aa).

Positions M1–A10 are enriched in low complexity. Residues M1–N20 form a disordered region. A run of 3 helical transmembrane segments spans residues P60–L80, F90–H110, and T121–F143. Residues H110–H114 carry the Histidine box-1 motif. Positions H147–H151 match the Histidine box-2 motif. A run of 3 helical transmembrane segments spans residues L169–Y189, P200–V220, and L228–F248. The short motif at H290–H294 is the Histidine box-3 element.

Belongs to the fatty acid desaturase type 1 family. DEGS subfamily.

Its subcellular location is the membrane. It carries out the reaction an N-acylsphinganine + 2 Fe(II)-[cytochrome b5] + O2 + 2 H(+) = an N-acylsphing-4-enine + 2 Fe(III)-[cytochrome b5] + 2 H2O. The protein operates within lipid metabolism; sphingolipid metabolism. Its function is as follows. Delta(4)-fatty-acid desaturase which introduces a double bond at the 4-position in the long-chain base (LCB) of ceramides. Required for sphingosine biosynthesis. In Schizosaccharomyces pombe (strain 972 / ATCC 24843) (Fission yeast), this protein is Sphingolipid delta(4)-desaturase (dsd1).